Here is a 1014-residue protein sequence, read N- to C-terminus: C2 domain-containing protein 5 (1014 aa).

Positions 1–109 (MPGKLKVKIV…EAATVISGWF (109 aa)) constitute a C2 domain. Positions 19, 26, 76, 78, 81, and 84 each coordinate Ca(2+). Disordered regions lie at residues 274–328 (LNPN…GRDG), 639–669 (ETVGSPIPEPRQRTRLLRSQSESSDEAAELD), 801–878 (ALQV…HRGG), and 992–1014 (EAGPGQPTAPGPQSAGVGGDSAT). The span at 275 to 292 (NPNTHSSGPSTPLKNQTY) shows a compositional bias: polar residues. Positions 293-318 (SFSPSKSFSRQSSSSDTDLSLTPKTG) are enriched in low complexity. Positions 319-328 (MGSGSAGRDG) are enriched in gly residues. Residues 830–840 (SSDSPGPSTFS) are compositionally biased toward polar residues. Over residues 993–1006 (AGPGQPTAPGPQSA) the composition is skewed to low complexity.

It depends on Ca(2+) as a cofactor.

The protein localises to the cytoplasmic vesicle membrane. Its subcellular location is the cytoplasm. It localises to the cell cortex. It is found in the cell membrane. The protein resides in the cell projection. The protein localises to the ruffle. Its function is as follows. May be required for insulin-stimulated glucose transport and glucose transporter SLC2A4/GLUT4 translocation from intracellular glucose storage vesicle (GSV) to the plasma membrane (PM) in adipocytes. May bind phospholipid membranes in a calcium-dependent manner. This Xenopus tropicalis (Western clawed frog) protein is C2 domain-containing protein 5 (c2cd5).